Reading from the N-terminus, the 102-residue chain is Small ribosomal subunit protein uS10 (102 aa).

It belongs to the universal ribosomal protein uS10 family. Part of the 30S ribosomal subunit.

Involved in the binding of tRNA to the ribosomes. In Clostridium acetobutylicum (strain ATCC 824 / DSM 792 / JCM 1419 / IAM 19013 / LMG 5710 / NBRC 13948 / NRRL B-527 / VKM B-1787 / 2291 / W), this protein is Small ribosomal subunit protein uS10.